Consider the following 414-residue polypeptide: Tar DNA-binding protein homolog 1 (414 aa).

Composition is skewed to basic and acidic residues over residues 1–44 and 153–167; these read MADE…KTTD and DDGRDGRSGRKRAVE. 2 disordered regions span residues 1-58 and 132-167; these read MADE…GDEP and SSADATSAKRRKVGSSDDSDSDDGRDGRSGRKRAVE. RRM domains follow at residues 173–259 and 262–341; these read VDLI…QGRP and SRIF…IAQP. The interval 343-414 is disordered; sequence EENNQSVGPD…APGDSRGPGW (72 aa). Positions 361–373 are enriched in basic and acidic residues; sequence NRRERDRPDRRPI.

As to quaternary structure, interacts with chromobox protein homolog hpl-2; interaction may maintain localization of hpl-2 to gene bodies. Widely expressed in a range of tissues including body wall muscles, pharynx and neurons of the midbody in adults and larvae.

It is found in the nucleus. Its subcellular location is the cytoplasm. RNA-binding protein which regulates transcription, splicing and RNA-editing. Limits the accumulation of double-stranded RNA by maintaining the abundance of the mature RNA transcripts that are formed from double-stranded precursor RNAs. Stress response protein that acts downstream of daf-16 in the insulin/IGF pathway to regulate longevity and the cellular stress response to osmotic, oxidative, proteotoxic and endoplasmic reticulum stress. Involved in the regulation of physiological processes including aging, fertility, growth and locomotion. Plays a role in maintaining localization of chromobox protein homolog hpl-2 to gene bodies, perhaps acting via binding to nascent RNA transcripts. The chain is Tar DNA-binding protein homolog 1 from Caenorhabditis elegans.